The sequence spans 82 residues: Diphthamide biosynthesis protein 3 (82 aa).

Positions 3–59 (TYDEIEIEDMTFEPENQMFTYPCPCGDRFQIYLDDMFEGEKVAVCPSCSLMIDVVFD) constitute a DPH-type MB domain. The Fe cation site is built by Cys-25, Cys-27, Cys-47, and Cys-50. Residues 66–82 (YYEEAGIHPPEPIAAAA) form a required for interaction with the elongator complex region.

This sequence belongs to the DPH3 family. Component of the 2-(3-amino-3-carboxypropyl)histidine synthase complex composed of DPH1, DPH2, KTI11/DPH3 and a NADH-dependent reductase, predominantly CBR1. Interacts with DPH1. Interacts with DPH2. Interacts with CBR1. Interacts with elongation factor 2. Interacts with ATS1/KTI13; the interaction is direct. Interacts with the 40S ribosomal protein RPS7A. Interacts with the 40S ribosomal protein RPS19A. Interacts with the elongator complex subunit IKI3/ELP1. Interacts with the elongator complex subunit ELP2. Interacts with the elongator complex subunit ELP3. Interacts with the elongator complex subunit ELP5.

The protein localises to the cytoplasm. Its subcellular location is the nucleus. The enzyme catalyses [3Fe-4S](1+)-[protein] + Fe(2+)-[Dph3] = [3Fe-4S](0)-[protein] + Fe(3+)-[Dph3]. It catalyses the reaction 2 [3Fe-4S](0)-[protein] + 2 Fe(2+)-[Dph3] + NADH = 2 [4Fe-4S](1+)-[protein] + 2 [Dph3] + NAD(+) + H(+). Its pathway is protein modification; peptidyl-diphthamide biosynthesis. Functionally, required for the first step of diphthamide biosynthesis, a post-translational modification of histidine which occurs in elongation factor 2. DPH1 and DPH2 transfer a 3-amino-3-carboxypropyl (ACP) group from S-adenosyl-L-methionine (SAM) to a histidine residue, the reaction is assisted by a reduction system comprising KTI11/DPH3 and a NADH-dependent reductase, predominantly CBR1. Acts as an electron donor to reduce the Fe-S cluster in DPH1-DPH2 keeping the [4Fe-4S] clusters in the active and reduced state. Restores iron to DPH1-DPH2 iron-sulfur clusters which have degraded from [4Fe-4S] to [3Fe-4S] by donating an iron atom to reform [4Fe-4S] clusters, in a manner dependent on the presence of elongation factor 2 and SAM. Together with ATS1; associates with the elongator complex and is required for tRNA Wobble base modifications mediated by the elongator complex. The elongator complex is required for multiple tRNA modifications, including mcm5U (5-methoxycarbonylmethyl uridine), mcm5s 2U (5-methoxycarbonylmethyl-2-thiouridine), and ncm5U (5-carbamoylmethyl uridine). This Saccharomyces cerevisiae (strain ATCC 204508 / S288c) (Baker's yeast) protein is Diphthamide biosynthesis protein 3.